Consider the following 187-residue polypeptide: Calmodulin-like protein 1 (187 aa).

Residue alanine 2 is modified to N-acetylalanine. EF-hand domains follow at residues 8-43 (EQIVEFREAFSLFDKDGDGSITTKELGTVMRSLGQN), 44-79 (PTEAELQDMISEVDADSNGNIEFKEFLGLMARKLRD), 81-116 (DSEEELKEAFRVFDKDQNGFISAAELRHVMANIGER), and 117-152 (LTDEEVGEMISEADVDGDGQINYEEFVKCMMAKKRR). Positions 21, 23, 25, 27, 32, 57, 59, 61, 63, 68, 94, 96, 98, 105, 130, 132, 134, 136, and 141 each coordinate Ca(2+). The disordered stretch occupies residues 153–187 (KRIEEKREHDGGSRTKSAGPSAAPASKRGQKCVIL). Residues 154-165 (RIEEKREHDGGS) show a composition bias toward basic and acidic residues. A compositionally biased stretch (low complexity) spans 169–178 (SAGPSAAPAS). Residue cysteine 184 is modified to Cysteine methyl ester. Residue cysteine 184 is the site of S-farnesyl cysteine attachment. A propeptide spans 185–187 (VIL) (removed in mature form).

Belongs to the calmodulin family. Expressed in roots, etiolated shoots and flowers.

The protein localises to the membrane. Functionally, calcium-binding protein that binds and activates CAMK1, a calcium/calmodulin-dependent kinase. In Oryza sativa subsp. indica (Rice), this protein is Calmodulin-like protein 1 (CML1).